A 429-amino-acid polypeptide reads, in one-letter code: Glycine betaine monooxygenase oxygenase subunit (429 aa).

The Rieske domain occupies 56–163; sequence WLIAGMTCEI…VKTAGGYIFI (108 aa). [2Fe-2S] cluster is bound by residues cysteine 98, histidine 100, cysteine 118, and histidine 121. 2 residues coordinate Fe cation: histidine 217 and histidine 222.

The protein belongs to the bacterial ring-hydroxylating dioxygenase alpha subunit family. As to quaternary structure, the system is composed of an oxygenase subunit (GbcA) and a reductase subunit (GbcB). Requires [2Fe-2S] cluster as cofactor. Fe cation is required as a cofactor.

It catalyses the reaction glycine betaine + NADH + O2 + H(+) = N,N-dimethylglycine + formaldehyde + NAD(+) + H2O. Involved in degradation of glycine betaine. Part of a Rieske-type oxygenase system that catalyzes the conversion of glycine betaine (GB) to dimethylglycine (DMG). This subunit is the terminal oxygenase component of the system. The polypeptide is Glycine betaine monooxygenase oxygenase subunit (Pseudomonas aeruginosa (strain UCBPP-PA14)).